The sequence spans 164 residues: Inner membrane assembly complex subunit 17 (164 aa).

The N-terminal 28 residues, 1–28, are a transit peptide targeting the mitochondrion; it reads MIKTAKISTLRLAITRNARNLSFTTLVR. Topologically, residues 29–97 are mitochondrial matrix; that stretch reads SPEVDNSKIK…NEVPLKRFTR (69 aa). A helical transmembrane segment spans residues 98-118; the sequence is PLWIFILMASTFYLGAHLVWW. At 119–164 the chain is on the mitochondrial intermembrane side; that stretch reads KLAYEKKEVELKHKVDSLETTLKDVMKEKATGPTPCNNKKSWYKFW. Residues 121 to 149 are a coiled coil; it reads AYEKKEVELKHKVDSLETTLKDVMKEKAT.

It belongs to the INA17 family. Component of the inner membrane assembly (INA) complex, composed of INA17 and INA22. Interacts with a subset of F(1)F(0)-ATP synthase subunits of the F(1)-domain and the peripheral stalk.

It is found in the mitochondrion inner membrane. Component of the INA complex (INAC) that promotes the biogenesis of mitochondrial F(1)F(0)-ATP synthase. INAC facilitates the assembly of the peripheral stalk and promotes the assembly of the catalytic F(1)-domain with the membrane-embedded F(0)-domain. The polypeptide is Inner membrane assembly complex subunit 17 (Candida glabrata (strain ATCC 2001 / BCRC 20586 / JCM 3761 / NBRC 0622 / NRRL Y-65 / CBS 138) (Yeast)).